We begin with the raw amino-acid sequence, 198 residues long: Ribonuclease HII (198 aa).

In terms of domain architecture, RNase H type-2 spans 10–198 (QLVAGVDEVG…PVKRALGLAS (189 aa)). Residues D16, E17, and D108 each coordinate a divalent metal cation.

It belongs to the RNase HII family. Mn(2+) is required as a cofactor. Requires Mg(2+) as cofactor.

It localises to the cytoplasm. It carries out the reaction Endonucleolytic cleavage to 5'-phosphomonoester.. Endonuclease that specifically degrades the RNA of RNA-DNA hybrids. The protein is Ribonuclease HII of Shigella sonnei (strain Ss046).